The chain runs to 224 residues: Endonuclease NucS (224 aa).

It belongs to the NucS endonuclease family.

It is found in the cytoplasm. Cleaves both 3' and 5' ssDNA extremities of branched DNA structures. The protein is Endonuclease NucS of Rhodococcus erythropolis (strain PR4 / NBRC 100887).